Here is a 591-residue protein sequence, read N- to C-terminus: L-fucose isomerase (591 aa).

Catalysis depends on proton acceptor residues E337 and D361. E337, D361, and H528 together coordinate Mn(2+).

This sequence belongs to the L-fucose isomerase family. In terms of assembly, homohexamer. Mn(2+) is required as a cofactor.

Its subcellular location is the cytoplasm. It carries out the reaction L-fucose = L-fuculose. The protein operates within carbohydrate degradation; L-fucose degradation; L-lactaldehyde and glycerone phosphate from L-fucose: step 1/3. Functionally, converts the aldose L-fucose into the corresponding ketose L-fuculose. The protein is L-fucose isomerase of Citrobacter koseri (strain ATCC BAA-895 / CDC 4225-83 / SGSC4696).